Here is a 169-residue protein sequence, read N- to C-terminus: Centrin-1 (169 aa).

The interval 1–21 is essential for homooligomerization; the sequence is MHSRKGASSLPRGRGAGKKTE. The disordered stretch occupies residues 1 to 25; the sequence is MHSRKGASSLPRGRGAGKKTELTEE. EF-hand domains are found at residues 25 to 60, 61 to 96, 98 to 133, and 134 to 169; these read EQRQ…LGFE, PKKE…KMAE, DPRE…LGEN, and LTDE…TNLF. Asp38, Asp40, Ser42, Cys44, Glu49, Asp74, Asp76, Thr78, Ser80, and Glu85 together coordinate Ca(2+).

Belongs to the centrin family. Monomer. Homooligomerizes in a Ca(2+)-dependent manner. Interaction via the C-terminus with other proteins disrupts and/or prevents homooligomerization. Interacts with SFI1.

It localises to the cytoplasm. Its subcellular location is the cytoskeleton. It is found in the microtubule organizing center. The protein resides in the centrosome. Functionally, acts as a calcium sensor. Part of the centrosome outer core complex. The protein is Centrin-1 of Toxoplasma gondii (strain ATCC 50611 / Me49).